We begin with the raw amino-acid sequence, 154 residues long: Large ribosomal subunit protein uL13 (154 aa).

It belongs to the universal ribosomal protein uL13 family. As to quaternary structure, part of the 50S ribosomal subunit.

Its function is as follows. This protein is one of the early assembly proteins of the 50S ribosomal subunit, although it is not seen to bind rRNA by itself. It is important during the early stages of 50S assembly. The chain is Large ribosomal subunit protein uL13 from Rhizobium rhizogenes (strain K84 / ATCC BAA-868) (Agrobacterium radiobacter).